Here is a 353-residue protein sequence, read N- to C-terminus: NADH-quinone oxidoreductase subunit H (353 aa).

The next 9 membrane-spanning stretches (helical) occupy residues 8 to 28, 75 to 95, 108 to 128, 148 to 168, 178 to 198, 229 to 249, 258 to 278, 297 to 317, and 319 to 339; these read LLVY…LFIW, GVFW…FAAI, IGIL…FMAG, VSYE…TGSL, SVPF…AAMA, LFYL…TTLF, LHPV…IIWV, FLLP…LAAP, and MNTA…ILLF.

This sequence belongs to the complex I subunit 1 family. As to quaternary structure, NDH-1 is composed of 14 different subunits. Subunits NuoA, H, J, K, L, M, N constitute the membrane sector of the complex.

It is found in the cell membrane. It carries out the reaction a quinone + NADH + 5 H(+)(in) = a quinol + NAD(+) + 4 H(+)(out). Its function is as follows. NDH-1 shuttles electrons from NADH, via FMN and iron-sulfur (Fe-S) centers, to quinones in the respiratory chain. The immediate electron acceptor for the enzyme in this species is believed to be ubiquinone. Couples the redox reaction to proton translocation (for every two electrons transferred, four hydrogen ions are translocated across the cytoplasmic membrane), and thus conserves the redox energy in a proton gradient. This subunit may bind ubiquinone. The sequence is that of NADH-quinone oxidoreductase subunit H from Dehalococcoides mccartyi (strain ATCC BAA-2266 / KCTC 15142 / 195) (Dehalococcoides ethenogenes (strain 195)).